We begin with the raw amino-acid sequence, 410 residues long: Multifunctional CCA protein (410 aa).

ATP is bound by residues glycine 8 and arginine 11. Glycine 8 and arginine 11 together coordinate CTP. Mg(2+) is bound by residues glutamate 21 and aspartate 23. ATP-binding residues include arginine 91, arginine 137, and arginine 140. Arginine 91, arginine 137, and arginine 140 together coordinate CTP. The HD domain occupies 228–329 (TGIHSLMALR…VKLLEQVDAF (102 aa)).

Belongs to the tRNA nucleotidyltransferase/poly(A) polymerase family. Bacterial CCA-adding enzyme type 1 subfamily. As to quaternary structure, monomer. Can also form homodimers and oligomers. Mg(2+) is required as a cofactor. It depends on Ni(2+) as a cofactor.

It carries out the reaction a tRNA precursor + 2 CTP + ATP = a tRNA with a 3' CCA end + 3 diphosphate. The catalysed reaction is a tRNA with a 3' CCA end + 2 CTP + ATP = a tRNA with a 3' CCACCA end + 3 diphosphate. In terms of biological role, catalyzes the addition and repair of the essential 3'-terminal CCA sequence in tRNAs without using a nucleic acid template. Adds these three nucleotides in the order of C, C, and A to the tRNA nucleotide-73, using CTP and ATP as substrates and producing inorganic pyrophosphate. tRNA 3'-terminal CCA addition is required both for tRNA processing and repair. Also involved in tRNA surveillance by mediating tandem CCA addition to generate a CCACCA at the 3' terminus of unstable tRNAs. While stable tRNAs receive only 3'-terminal CCA, unstable tRNAs are marked with CCACCA and rapidly degraded. The sequence is that of Multifunctional CCA protein from Legionella pneumophila (strain Paris).